The chain runs to 250 residues: Phosphoribosylaminoimidazole-succinocarboxamide synthase (250 aa).

It belongs to the SAICAR synthetase family.

The enzyme catalyses 5-amino-1-(5-phospho-D-ribosyl)imidazole-4-carboxylate + L-aspartate + ATP = (2S)-2-[5-amino-1-(5-phospho-beta-D-ribosyl)imidazole-4-carboxamido]succinate + ADP + phosphate + 2 H(+). The protein operates within purine metabolism; IMP biosynthesis via de novo pathway; 5-amino-1-(5-phospho-D-ribosyl)imidazole-4-carboxamide from 5-amino-1-(5-phospho-D-ribosyl)imidazole-4-carboxylate: step 1/2. The protein is Phosphoribosylaminoimidazole-succinocarboxamide synthase of Chloroflexus aggregans (strain MD-66 / DSM 9485).